The chain runs to 412 residues: Phosphoglycerate kinase (412 aa).

Substrate contacts are provided by residues Asp-26–Asn-28, Arg-42, His-65–Arg-68, Arg-133, and Arg-166. ATP is bound by residues Lys-217, Gly-308, Glu-339, and Gly-368–Ser-371.

It belongs to the phosphoglycerate kinase family. Monomer.

It is found in the cytoplasm. The enzyme catalyses (2R)-3-phosphoglycerate + ATP = (2R)-3-phospho-glyceroyl phosphate + ADP. Its pathway is carbohydrate degradation; glycolysis; pyruvate from D-glyceraldehyde 3-phosphate: step 2/5. In Synechococcus sp. (strain JA-2-3B'a(2-13)) (Cyanobacteria bacterium Yellowstone B-Prime), this protein is Phosphoglycerate kinase.